We begin with the raw amino-acid sequence, 95 residues long: Small ribosomal subunit protein uS19 (95 aa).

This sequence belongs to the universal ribosomal protein uS19 family.

Its function is as follows. Protein S19 forms a complex with S13 that binds strongly to the 16S ribosomal RNA. This Myxococcus xanthus (strain DK1622) protein is Small ribosomal subunit protein uS19.